The primary structure comprises 618 residues: Phostensin (618 aa).

Positions 15 to 33 are enriched in basic and acidic residues; the sequence is RRQEEAAVRGREKAERERL. Residues 15 to 505 are disordered; it reads RRQEEAAVRG…PATADAAVPG (491 aa). Ser54 bears the Phosphoserine mark. The segment covering 96-109 has biased composition (low complexity); sequence QQQQQQQQQQQQQQ. Basic and acidic residues-rich tracts occupy residues 110 to 160 and 173 to 197; these read RSEE…ERRL and LESRDWRQSPGEAGDRSSRLSEVRK. A phosphoserine mark is found at Ser131, Ser139, Ser181, and Ser201. At Thr205 the chain carries Phosphothreonine. The residue at position 231 (Ser231) is a Phosphoserine. 2 stretches are compositionally biased toward basic and acidic residues: residues 234–245 and 271–289; these read DSDHEKLGLTDA and SGEERKDCLEECGRKEERT. The span at 308-319 shows a compositional bias: low complexity; it reads EAAGSSSGGVEA. Positions 348-358 are enriched in basic and acidic residues; that stretch reads KVRDRTPRDTE. Residues 429–451 are compositionally biased toward pro residues; it reads RPPPAAPLSPPPPAPPAPQPPGD. Position 437 is a phosphoserine (Ser437). Lys462 is subject to N6-acetyllysine. The segment covering 485-505 has biased composition (low complexity); the sequence is APPAAAATPATPATADAAVPG. Ser535 bears the Phosphoserine mark. A disordered region spans residues 556 to 594; sequence YQYPSESSVLEELGPEPEAPSAPSPPAAQPDDEEDEEEL. Residues 572–583 are compositionally biased toward pro residues; it reads PEAPSAPSPPAA. The segment covering 585-594 has biased composition (acidic residues); the sequence is PDDEEDEEEL.

In terms of assembly, interacts with Protein phosphatase 1 (PP1).

It localises to the cytoplasm. Its subcellular location is the cytoskeleton. Functionally, may target protein phosphatase 1 to F-actin cytoskeleton. In Sus scrofa (Pig), this protein is Phostensin (PPP1R18).